A 192-amino-acid chain; its full sequence is Peptidyl-tRNA hydrolase (192 aa).

Residue Y17 coordinates tRNA. H22 (proton acceptor) is an active-site residue. Positions 68, 70, and 116 each coordinate tRNA.

Belongs to the PTH family. As to quaternary structure, monomer.

It is found in the cytoplasm. The catalysed reaction is an N-acyl-L-alpha-aminoacyl-tRNA + H2O = an N-acyl-L-amino acid + a tRNA + H(+). In terms of biological role, hydrolyzes ribosome-free peptidyl-tRNAs (with 1 or more amino acids incorporated), which drop off the ribosome during protein synthesis, or as a result of ribosome stalling. Its function is as follows. Catalyzes the release of premature peptidyl moieties from peptidyl-tRNA molecules trapped in stalled 50S ribosomal subunits, and thus maintains levels of free tRNAs and 50S ribosomes. The protein is Peptidyl-tRNA hydrolase of Xylella fastidiosa (strain Temecula1 / ATCC 700964).